A 395-amino-acid polypeptide reads, in one-letter code: D-alanine--D-alanine ligase (395 aa).

The region spanning K172 to E391 is the ATP-grasp domain. An ATP-binding site is contributed by D204–E266. Residues D345, E358, and N360 each coordinate Mg(2+).

The protein belongs to the D-alanine--D-alanine ligase family. Requires Mg(2+) as cofactor. It depends on Mn(2+) as a cofactor.

It is found in the cytoplasm. The enzyme catalyses 2 D-alanine + ATP = D-alanyl-D-alanine + ADP + phosphate + H(+). Its pathway is cell wall biogenesis; peptidoglycan biosynthesis. Cell wall formation. The protein is D-alanine--D-alanine ligase of Bifidobacterium longum subsp. infantis (strain ATCC 15697 / DSM 20088 / JCM 1222 / NCTC 11817 / S12).